The following is a 402-amino-acid chain: S-adenosylmethionine synthase (402 aa).

Residue His16 coordinates ATP. Asp18 provides a ligand contact to Mg(2+). Glu44 provides a ligand contact to K(+). L-methionine contacts are provided by Glu57 and Gln109. Residues 109–119 (QSAHIAQGVDA) are flexible loop. ATP is bound by residues 174–176 (DTK), Asp252, 258–259 (RK), Ala275, and Lys279. An L-methionine-binding site is contributed by Asp252. Position 283 (Lys283) interacts with L-methionine.

It belongs to the AdoMet synthase family. Homotetramer; dimer of dimers. It depends on Mg(2+) as a cofactor. Requires K(+) as cofactor.

It is found in the cytoplasm. The enzyme catalyses L-methionine + ATP + H2O = S-adenosyl-L-methionine + phosphate + diphosphate. Its pathway is amino-acid biosynthesis; S-adenosyl-L-methionine biosynthesis; S-adenosyl-L-methionine from L-methionine: step 1/1. In terms of biological role, catalyzes the formation of S-adenosylmethionine (AdoMet) from methionine and ATP. The overall synthetic reaction is composed of two sequential steps, AdoMet formation and the subsequent tripolyphosphate hydrolysis which occurs prior to release of AdoMet from the enzyme. The polypeptide is S-adenosylmethionine synthase (Rhizorhabdus wittichii (strain DSM 6014 / CCUG 31198 / JCM 15750 / NBRC 105917 / EY 4224 / RW1) (Sphingomonas wittichii)).